We begin with the raw amino-acid sequence, 669 residues long: Alpha-1,6-mannosylglycoprotein 6-beta-N-acetylglucosaminyltransferase (669 aa).

The Cytoplasmic segment spans residues 1-7 (MRRRHRC). A helical; Signal-anchor for type II membrane protein membrane pass occupies residues 8–28 (VALLFIFSAFITPLGFFYYTI). Over 29–669 (SNESKRYSEE…EQHAICKKCL (641 aa)) the chain is Lumenal. N-linked (GlcNAc...) asparagine glycosylation is found at Asn-30, Asn-412, Asn-437, and Asn-626.

Belongs to the glycosyltransferase 18 family. As to expression, expressed in a complex subset of neurons in larvae and in the spermathecal and pharyngeal-intestinal valves and certain vulval cells of adults.

It is found in the golgi apparatus membrane. It catalyses the reaction N(4)-{beta-D-GlcNAc-(1-&gt;2)-[beta-D-GlcNAc-(1-&gt;4)]-alpha-D-Man-(1-&gt;3)-[beta-D-GlcNAc-(1-&gt;2)-alpha-D-Man-(1-&gt;6)]-beta-D-Man-(1-&gt;4)-beta-D-GlcNAc-(1-&gt;4)-beta-D-GlcNAc}-L-asparaginyl-[protein] + UDP-N-acetyl-alpha-D-glucosamine = N(4)-{beta-D-GlcNAc-(1-&gt;2)-[beta-D-GlcNAc-(1-&gt;4)]-alpha-D-Man-(1-&gt;3)-[beta-D-GlcNAc-(1-&gt;2)-[beta-D-GlcNAc-(1-&gt;6)]-alpha-D-Man-(1-&gt;6)]-beta-D-Man-(1-&gt;4)-beta-D-GlcNAc-(1-&gt;4)-beta-D-GlcNAc}-L-asparaginyl-[protein] + UDP + H(+). The protein operates within protein modification; protein glycosylation. Functionally, catalyzes the addition of N-acetylglucosamine (GlcNAc) in beta 1-6 linkage to the alpha-linked mannose of biantennary N-linked oligosaccharides. This Caenorhabditis elegans protein is Alpha-1,6-mannosylglycoprotein 6-beta-N-acetylglucosaminyltransferase (gly-2).